A 174-amino-acid polypeptide reads, in one-letter code: Transcription factor bHLH36 (174 aa).

One can recognise a bHLH domain in the interval 1-53 (MEKMMHRETERQRRQEMASLYASLRSLLPLHFIKGKRSTSDQVNEAVNYIKYL).

As to quaternary structure, homodimer. As to expression, expressed constitutively in roots, leaves, stems, and flowers.

The protein localises to the nucleus. This Arabidopsis thaliana (Mouse-ear cress) protein is Transcription factor bHLH36 (BHLH36).